Here is a 188-residue protein sequence, read N- to C-terminus: MGRGGRGVGGGRPEGHGASVEGGRTRQTEGMDLISPDPGRWAARFDRHRWRIRLALPQARTEHIGSTAIGTICAKDVVDILVGEVDVTAAAQALVSAGYVIEGERPNHIWLCWPDPQQREAVVHVVIAGGDIWHQRLLFRDFLKRSPAEARAYEALKQRLAAQTDDWGEYTAQKAAFVARILQRAAES.

Residues 1–12 (MGRGGRGVGGGR) are compositionally biased toward gly residues. Positions 1–37 (MGRGGRGVGGGRPEGHGASVEGGRTRQTEGMDLISPD) are disordered.

It belongs to the UPF0157 (GrpB) family.

This is UPF0157 protein DR_2534 from Deinococcus radiodurans (strain ATCC 13939 / DSM 20539 / JCM 16871 / CCUG 27074 / LMG 4051 / NBRC 15346 / NCIMB 9279 / VKM B-1422 / R1).